We begin with the raw amino-acid sequence, 187 residues long: Intermembrane transport lipoprotein PqiC (187 aa).

An N-terminal signal peptide occupies residues 1–15; it reads MKKWLVTIAALWLAG. The N-palmitoyl cysteine moiety is linked to residue cysteine 16. The S-diacylglycerol cysteine moiety is linked to residue cysteine 16.

As to quaternary structure, may form a complex composed of PqiA, PqiB and PqiC. Interacts with PqiB.

Its subcellular location is the cell outer membrane. Functionally, component of a transport pathway that contributes to membrane integrity. This chain is Intermembrane transport lipoprotein PqiC, found in Escherichia coli (strain K12).